The following is a 117-amino-acid chain: Large ribosomal subunit protein bL20 (117 aa).

This sequence belongs to the bacterial ribosomal protein bL20 family.

Its function is as follows. Binds directly to 23S ribosomal RNA and is necessary for the in vitro assembly process of the 50S ribosomal subunit. It is not involved in the protein synthesizing functions of that subunit. This Histophilus somni (strain 129Pt) (Haemophilus somnus) protein is Large ribosomal subunit protein bL20.